Here is a 326-residue protein sequence, read N- to C-terminus: MSHDWTDNRKNLMLFAGRAHPELAEQVAKELDVHVTSQDAREFANGEIFVRFHESVRGCDAFVLQSCPAPVNRWLMEQLIMIDALKRGSAKRITAVMPFYPYARQDKKHRGREPISARLIADLLKTAGADRIVTVDLHTDQIQGFFDGPVDHMRGQNLLTGYIRDNYPDGNMVVVSPDSGRVRIAEKWADALGGVPLAFIHKTRDPRVPNQVVSNRVVGDVAGRTCVLIDDMIDTGGTIAGAVALLHNDGAGDVIIAATHGVLSDPAAQRLASCGAREVIVTNTLPIGEDKRFPQLTVLSIAPLLASTIRAVFENGSVTGLFDGDA.

ATP-binding positions include 45 to 47 (NGE) and 104 to 105 (RQ). Mg(2+) is bound by residues His138 and Asp178. The active site involves Lys202. Residues Arg204, Asp230, and 234 to 238 (DTGGT) contribute to the D-ribose 5-phosphate site.

It belongs to the ribose-phosphate pyrophosphokinase family. Class I subfamily. Homohexamer. Requires Mg(2+) as cofactor.

The protein resides in the cytoplasm. It catalyses the reaction D-ribose 5-phosphate + ATP = 5-phospho-alpha-D-ribose 1-diphosphate + AMP + H(+). It participates in metabolic intermediate biosynthesis; 5-phospho-alpha-D-ribose 1-diphosphate biosynthesis; 5-phospho-alpha-D-ribose 1-diphosphate from D-ribose 5-phosphate (route I): step 1/1. In terms of biological role, involved in the biosynthesis of the central metabolite phospho-alpha-D-ribosyl-1-pyrophosphate (PRPP) via the transfer of pyrophosphoryl group from ATP to 1-hydroxyl of ribose-5-phosphate (Rib-5-P). This chain is Ribose-phosphate pyrophosphokinase, found in Mycobacterium bovis (strain ATCC BAA-935 / AF2122/97).